A 761-amino-acid chain; its full sequence is Copper-exporting P-type ATPase (761 aa).

Position 2 is an N-acetylthreonine (T2). Residues 14-78 (QRIQLRISGM…AVRRAGYQAD (65 aa)) form the HMA domain. Residues C25 and C28 each coordinate Cu(+). The next 6 membrane-spanning stretches (helical) occupy residues 102-122 (LAIA…FGVV), 129-149 (GWQW…AWPF), 164-184 (METL…YTVF), 199-219 (LLGS…FVLV), 361-381 (VFVP…LIAG), and 387-407 (AVSA…GLAT). Catalysis depends on D443, which acts as the 4-aspartylphosphate intermediate. Helical transmembrane passes span 695 to 714 (MVWA…AGLL) and 718 to 735 (VAGA…SNSL).

This sequence belongs to the cation transport ATPase (P-type) (TC 3.A.3) family. Type IB subfamily.

The protein localises to the cell membrane. It catalyses the reaction Cu(+)(in) + ATP + H2O = Cu(+)(out) + ADP + phosphate + H(+). Its activity is regulated as follows. ATPase activity is stimulated by Cu(+) ions. Involved in copper export. Could be involved in the copper detoxification of mycobacterial cells. The sequence is that of Copper-exporting P-type ATPase (ctpA) from Mycobacterium tuberculosis (strain ATCC 25618 / H37Rv).